The sequence spans 1634 residues: Leucine-rich repeat-containing protein 37A3 (1634 aa).

A signal peptide spans 1–35 (MTSAQCPALACVMSPLRFWGPWPLLMWQLLWLLVK). The Extracellular segment spans residues 36–1581 (EAQPLEWVKD…ELPGYGYTKK (1546 aa)). Disordered regions lie at residues 53-104 (PLGP…ESTE), 129-154 (SQQD…KKDP), 172-531 (TPQS…VVVA), 619-642 (PEPT…KHPE), and 758-777 (EPTT…APRP). One copy of the LRR 1 repeat lies at 137-160 (LSPQERLPVSPKKLKKDPAQRWSL). Composition is skewed to polar residues over residues 172 to 189 (TPQS…STDT) and 223 to 237 (ETQN…QSSS). LRR repeat units follow at residues 230–253 (LEDI…LEEE) and 267–290 (ESSM…EDQA). Residues 238–249 (LQQEAPAQLPQL) are compositionally biased toward low complexity. N-linked (GlcNAc...) asparagine glycosylation occurs at Asn296. A compositionally biased stretch (polar residues) spans 307-326 (TITSEPTNETESSQAQQETP). Residues 358-368 (SEQQQPVQPSE) are compositionally biased toward low complexity. Over residues 433-446 (LVHQEATTRLSGSG) the composition is skewed to polar residues. Positions 482–493 (SPEPINNENPSP) are enriched in low complexity. A compositionally biased stretch (polar residues) spans 760–770 (TTETGHSTALE). LRR repeat units follow at residues 864-887 (NGTF…VWKA), 888-911 (YSWT…SFEG), 912-935 (LLSL…TFEP), 937-959 (PFLK…TFQA), 963-987 (MQFL…LFKL), and 1002-1027 (LTTL…MACC). A glycan (N-linked (GlcNAc...) asparagine) is linked at Asn1079. 2 LRR repeats span residues 1124 to 1146 (LPYF…KLPT) and 1151 to 1176 (LAKI…SIQK). 2 stretches are compositionally biased toward basic and acidic residues: residues 1181–1191 (EVGRQSIRREQ) and 1201–1216 (AEEK…ELKQ). Disordered stretches follow at residues 1181–1227 (EVGR…EKLA) and 1306–1329 (RFHK…KVRK). An LRR 12 repeat occupies 1359-1384 (FSSLRDLSPQENPFLEVSAPSEHFIE). A helical transmembrane segment spans residues 1582-1602 (LILALIVTGILTILIILLCLI). At 1603 to 1634 (EICCHRRSLQEDEEGFSRDSEAPTEEESEALP) the chain is on the cytoplasmic side. The tract at residues 1614-1634 (DEEGFSRDSEAPTEEESEALP) is disordered. Residues 1624–1634 (APTEEESEALP) show a composition bias toward acidic residues.

This sequence belongs to the LRRC37A family.

The protein localises to the membrane. The polypeptide is Leucine-rich repeat-containing protein 37A3 (LRRC37A3) (Homo sapiens (Human)).